The sequence spans 621 residues: Kelch-like protein 40 (621 aa).

The BTB domain maps to 33–98 (LDCVVRVGER…LYTSEIALDE (66 aa)). Residues 133–239 (CLAVFRLGLL…PRAFLETRVE (107 aa)) enclose the BACK domain. The interval 265–298 (LTTLRKKKKEKGEQTARAKEANQGTEDTKAEDDE) is disordered. A compositionally biased stretch (basic and acidic residues) spans 274–284 (EKGEQTARAKE). Kelch repeat units lie at residues 360 to 412 (QVFV…EALN), 413 to 462 (AIYV…SHMD), 463 to 510 (LVYV…VHDG), 512 to 557 (IFVA…SLAG), and 559 to 613 (LYAL…PVRL).

It belongs to the KLHL40 family. As to quaternary structure, component of the BCR(KLHL40) E3 ubiquitin ligase complex, at least composed of CUL3, KLHL40 and RBX1. Interacts with LMOD3. In terms of tissue distribution, specifically expressed in skeletal muscles in embryonic, neonatal and adults. Expressed in various types of muscles, including extensor digitorum longus, gastrocnemius, soleus, diaphragm, masseter and heart (at protein level). Not detected in brain, liver and lung (at protein level).

It localises to the cytoplasm. The protein resides in the myofibril. The protein localises to the sarcomere. It is found in the a band. Its subcellular location is the i band. In terms of biological role, substrate-specific adapter of a BCR (BTB-CUL3-RBX1) E3 ubiquitin ligase complex that acts as a key regulator of skeletal muscle development. The BCR(KLHL40) complex acts by mediating ubiquitination and degradation of TFDP1, thereby regulating the activity of the E2F:DP transcription factor complex. Promotes stabilization of LMOD3 by acting as a negative regulator of LMOD3 ubiquitination; the molecular process by which it negatively regulates ubiquitination of LMOD3 is however unclear. This is Kelch-like protein 40 from Mus musculus (Mouse).